A 970-amino-acid polypeptide reads, in one-letter code: Sodium/calcium exchanger 1 (970 aa).

The N-terminal stretch at 1–32 (MLRLSLSPTYSLGFHLLAMMTLLISHVDHITA) is a signal peptide. Residues 33-71 (ETEMVEEGNETGECTGSYYCKKGVILPIWEPQDPSFGDK) lie on the Extracellular side of the membrane. Asparagine 41 carries N-linked (GlcNAc...) asparagine glycosylation. Residues 72–92 (IARATVYFVAMVYMFLGVSII) traverse the membrane as a helical segment. The Cytoplasmic portion of the chain corresponds to 93-133 (ADRFMSSIEVITSQEKEITIKKPNGETTKTTVRIWNETVSN). A helical membrane pass occupies residues 134-154 (LTLMALGSSAPEILLSVIEVC). One copy of the Alpha-1 repeat lies at 138–178 (ALGSSAPEILLSVIEVCGHNFTAGDLGPSTIVGSAAFNMFI). The Extracellular portion of the chain corresponds to 155 to 167 (GHNFTAGDLGPST). N-linked (GlcNAc...) asparagine glycosylation is present at asparagine 157. A helical transmembrane segment spans residues 168-188 (IVGSAAFNMFIIIALCVYVVP). The Cytoplasmic segment spans residues 189-201 (DGETRKIKHLRVF). The helical transmembrane segment at 202 to 222 (FVTAAWSIFAYTWLYIILSVI) threads the bilayer. Residues 223–228 (SPGVVE) lie on the Extracellular side of the membrane. The helical transmembrane segment at 229-249 (VWEGLLTFFFFPICVVFAWVA) threads the bilayer. The Cytoplasmic portion of the chain corresponds to 250-797 (DRRLLFYKYV…FVPPTEYWNG (548 aa)). The segment at 251–270 (RRLLFYKYVYKRYRAGKQRG) is putative calmodulin-binding region. A phosphoserine mark is found at serine 282 and serine 389. 2 Calx-beta domains span residues 393 to 493 (VNTE…VHLS) and 524 to 624 (ATVT…LEIG). Ca(2+)-binding residues include glutamate 417, aspartate 453, aspartate 478, aspartate 479, isoleucine 481, glutamate 483, glutamate 486, aspartate 530, aspartate 531, aspartate 532, glutamate 548, aspartate 584, aspartate 610, glutamate 611, glutamate 612, and glutamate 715. A helical membrane pass occupies residues 798–818 (WACFIVSILMIGLLTAFIGDL). Over 819 to 821 (ASH) the chain is Extracellular. A helical transmembrane segment spans residues 822-842 (FGCTIGLKDSVTAVVFVALGT). The stretch at 839–875 (ALGTSVPDTFASKVAATQDQYADASIGNVTGSNAVNV) is one Alpha-2 repeat. Topologically, residues 843–871 (SVPDTFASKVAATQDQYADASIGNVTGSN) are cytoplasmic. Residues 872 to 892 (AVNVFLGIGVAWSIAAIYHAA) form a helical membrane-spanning segment. At 893–903 (NGEQFKVSPGT) the chain is on the extracellular side. A helical transmembrane segment spans residues 904–924 (LAFSVTLFTIFAFINVGVLLY). Topologically, residues 925–941 (RRRPEIGGELGGPRTAK) are cytoplasmic. A helical membrane pass occupies residues 942–962 (LLTSCLFVLLWLLYIFFSSLE). Residues 963–970 (AYCHIKGF) are Extracellular-facing.

Belongs to the Ca(2+):cation antiporter (CaCA) (TC 2.A.19) family. SLC8 subfamily.

The protein resides in the cell membrane. It carries out the reaction Ca(2+)(in) + 3 Na(+)(out) = Ca(2+)(out) + 3 Na(+)(in). With respect to regulation, activated by micromolar levels of Ca(2+). Functionally, mediates the exchange of one Ca(2+) ion against three to four Na(+) ions across the cell membrane, and thereby contributes to the regulation of cytoplasmic Ca(2+) levels and Ca(2+)-dependent cellular processes. Contributes to Ca(2+) transport during excitation-contraction coupling in muscle. In a first phase, voltage-gated channels mediate the rapid increase of cytoplasmic Ca(2+) levels due to release of Ca(2+) stores from the endoplasmic reticulum. SLC8A1 mediates the export of Ca(2+) from the cell during the next phase, so that cytoplasmic Ca(2+) levels rapidly return to baseline. Required for normal embryonic heart development and the onset of heart contractions. The protein is Sodium/calcium exchanger 1 (SLC8A1) of Cavia porcellus (Guinea pig).